A 334-amino-acid polypeptide reads, in one-letter code: HTH-type transcriptional repressor PurR (334 aa).

The HTH lacI-type domain occupies 2–56; the sequence is ATIKDVARLAGVSTTTVSHVINKTRFVAEATQEKVMKAVDELNYAPSAVARSLKC. The H-T-H motif DNA-binding region spans 4–23; the sequence is IKDVARLAGVSTTTVSHVIN. Residues 48–56 mediate DNA binding; the sequence is SAVARSLKC. Residues phenylalanine 73, lysine 189, phenylalanine 220, and aspartate 274 each coordinate hypoxanthine.

In terms of assembly, homodimer.

Its pathway is purine metabolism; purine nucleotide biosynthesis [regulation]. Functionally, is the main repressor of the genes involved in the de novo synthesis of purine nucleotides, regulating purB, purC, purEK, purF, purHD, purL, purMN and guaBA expression. PurR is allosterically activated to bind its cognate DNA by binding the purine corepressors, hypoxanthine or guanine, thereby effecting transcription repression. This is HTH-type transcriptional repressor PurR from Vibrio parahaemolyticus serotype O3:K6 (strain RIMD 2210633).